Consider the following 490-residue polypeptide: Bifunctional protein HldE (490 aa).

The ribokinase stretch occupies residues Met-1–Gly-330. Residue Asn-205–Glu-208 coordinates ATP. Asp-275 is a catalytic residue. The interval Phe-356–Glu-490 is cytidylyltransferase.

This sequence in the N-terminal section; belongs to the carbohydrate kinase PfkB family. The protein in the C-terminal section; belongs to the cytidylyltransferase family. Homodimer.

It catalyses the reaction D-glycero-beta-D-manno-heptose 7-phosphate + ATP = D-glycero-beta-D-manno-heptose 1,7-bisphosphate + ADP + H(+). The enzyme catalyses D-glycero-beta-D-manno-heptose 1-phosphate + ATP + H(+) = ADP-D-glycero-beta-D-manno-heptose + diphosphate. The protein operates within nucleotide-sugar biosynthesis; ADP-L-glycero-beta-D-manno-heptose biosynthesis; ADP-L-glycero-beta-D-manno-heptose from D-glycero-beta-D-manno-heptose 7-phosphate: step 1/4. Its pathway is nucleotide-sugar biosynthesis; ADP-L-glycero-beta-D-manno-heptose biosynthesis; ADP-L-glycero-beta-D-manno-heptose from D-glycero-beta-D-manno-heptose 7-phosphate: step 3/4. Functionally, catalyzes the phosphorylation of D-glycero-D-manno-heptose 7-phosphate at the C-1 position to selectively form D-glycero-beta-D-manno-heptose-1,7-bisphosphate. Catalyzes the ADP transfer from ATP to D-glycero-beta-D-manno-heptose 1-phosphate, yielding ADP-D-glycero-beta-D-manno-heptose. This Geobacter sulfurreducens (strain ATCC 51573 / DSM 12127 / PCA) protein is Bifunctional protein HldE.